A 1213-amino-acid polypeptide reads, in one-letter code: DNA-directed RNA polymerase subunit beta' (1213 aa).

Residues Cys-60, Cys-62, Cys-75, and Cys-78 each coordinate Zn(2+). Asp-450, Asp-452, and Asp-454 together coordinate Mg(2+). Positions 819, 893, 900, and 903 each coordinate Zn(2+).

It belongs to the RNA polymerase beta' chain family. In terms of assembly, the RNAP catalytic core consists of 2 alpha, 1 beta, 1 beta' and 1 omega subunit. When a sigma factor is associated with the core the holoenzyme is formed, which can initiate transcription. It depends on Mg(2+) as a cofactor. Requires Zn(2+) as cofactor.

It catalyses the reaction RNA(n) + a ribonucleoside 5'-triphosphate = RNA(n+1) + diphosphate. DNA-dependent RNA polymerase catalyzes the transcription of DNA into RNA using the four ribonucleoside triphosphates as substrates. The protein is DNA-directed RNA polymerase subunit beta' of Streptococcus pyogenes serotype M2 (strain MGAS10270).